The sequence spans 293 residues: Ribonuclease HIII (293 aa).

The 216-residue stretch at 78–293 (LPLIGTDEVG…TEKAKKRLER (216 aa)) folds into the RNase H type-2 domain. 3 residues coordinate a divalent metal cation: D84, E85, and D187.

This sequence belongs to the RNase HII family. RnhC subfamily. The cofactor is Mn(2+). Mg(2+) serves as cofactor.

The protein resides in the cytoplasm. It carries out the reaction Endonucleolytic cleavage to 5'-phosphomonoester.. Functionally, endonuclease that specifically degrades the RNA of RNA-DNA hybrids. This chain is Ribonuclease HIII, found in Streptococcus pneumoniae serotype 19F (strain G54).